Reading from the N-terminus, the 245-residue chain is Pyridoxine 5'-phosphate synthase (245 aa).

Position 9 (Asn-9) interacts with 3-amino-2-oxopropyl phosphate. 11-12 (DH) contributes to the 1-deoxy-D-xylulose 5-phosphate binding site. 3-amino-2-oxopropyl phosphate is bound at residue Arg-20. His-45 serves as the catalytic Proton acceptor. 1-deoxy-D-xylulose 5-phosphate is bound by residues Arg-47 and His-52. Glu-72 acts as the Proton acceptor in catalysis. Thr-102 contributes to the 1-deoxy-D-xylulose 5-phosphate binding site. His-193 (proton donor) is an active-site residue. Residues Gly-194 and 215–216 (GH) each bind 3-amino-2-oxopropyl phosphate.

It belongs to the PNP synthase family. Homooctamer; tetramer of dimers.

Its subcellular location is the cytoplasm. It carries out the reaction 3-amino-2-oxopropyl phosphate + 1-deoxy-D-xylulose 5-phosphate = pyridoxine 5'-phosphate + phosphate + 2 H2O + H(+). Its pathway is cofactor biosynthesis; pyridoxine 5'-phosphate biosynthesis; pyridoxine 5'-phosphate from D-erythrose 4-phosphate: step 5/5. In terms of biological role, catalyzes the complicated ring closure reaction between the two acyclic compounds 1-deoxy-D-xylulose-5-phosphate (DXP) and 3-amino-2-oxopropyl phosphate (1-amino-acetone-3-phosphate or AAP) to form pyridoxine 5'-phosphate (PNP) and inorganic phosphate. This is Pyridoxine 5'-phosphate synthase from Shewanella oneidensis (strain ATCC 700550 / JCM 31522 / CIP 106686 / LMG 19005 / NCIMB 14063 / MR-1).